The sequence spans 639 residues: Tetracycline resistance protein TetW (639 aa).

The tr-type G domain maps to 1 to 243 (MKIINIGILA…VTGLFQPIGE (243 aa)). Residues 10 to 17 (AHVDAGKT), 74 to 78 (DTPGH), and 128 to 131 (NKID) contribute to the GTP site.

This sequence belongs to the TRAFAC class translation factor GTPase superfamily. Classic translation factor GTPase family. TetM/TetO subfamily.

In terms of biological role, abolishes the inhibitory effect of tetracyclin on protein synthesis by a non-covalent modification of the ribosomes. This is Tetracycline resistance protein TetW (tetW) from Butyrivibrio fibrisolvens.